Reading from the N-terminus, the 1118-residue chain is Collagenase ColG (1118 aa).

Positions 1-45 are cleaved as a signal peptide; that stretch reads MKKNILKILMDSYSKESKIQTVRRVTSVSLLAVYLTMNTSSLVLA. Positions 46–110 are excised as a propeptide; that stretch reads KPIENTNDTS…KSKSTLRSAS (65 aa). The segment at 111-786 is S1 metalloprotease domain, degrades both FALGPA (furylacryloyl-Leu-Gly-Pro-Ala) and type I collagen; the sequence is IANTNSEKYD…QYDVVFHGVL (676 aa). The interval 119 to 388 is activator domain required for full activity on collagen; sequence YDFEYLNGLS…AMERITWDYD (270 aa). A catalytic subdomain region spans residues 389-670; it reads GIGSNGKKVD…IQELADKYQG (282 aa). The tract at residues 396–1118 is degrades soluble FALGPA peptide (furylacryloyl-Leu-Gly-Pro-Ala) but not type I collagen; the sequence is KVDHDKFLDD…SGNYELRVNK (723 aa). Glu-498 serves as a coordination point for Ca(2+). His-523 contributes to the Zn(2+) binding site. Glu-524 is a catalytic residue. Position 527 (His-527) interacts with Zn(2+). 3 residues coordinate Ca(2+): Ala-531, Val-535, and Gly-537. Position 555 (Glu-555) interacts with Zn(2+). The segment at 679–790 is helper subdomain; it reads DYLKDHGYKK…VFHGVLTDNA (112 aa). The S2 domain stretch occupies residues 787–882; that stretch reads TDNADISNNK…SFTIEIKNED (96 aa). Asn-795, Lys-796, Asp-823, Asp-825, Asp-864, Glu-890, Glu-892, Asn-894, Asp-913, Asp-918, Ala-920, Asp-921, Glu-1009, Glu-1011, Asn-1013, Asp-1014, Ser-1032, Asp-1037, Arg-1039, and Asp-1040 together coordinate Ca(2+). Residues 797–885 form the PKD domain; that stretch reads APIAKVTGPS…IEIKNEDTTT (89 aa). An S3a collagen-binding domain region spans residues 886–1003; it reads PITKEMEPND…SYSLNIKGLG (118 aa). The S3b collagen-binding domain stretch occupies residues 1008-1118; it reads KEKENNDSSD…SGNYELRVNK (111 aa). Residues 1102–1106 form a collagen-binding region; it reads LVYKY.

This sequence belongs to the peptidase M9B family. Collagenase subfamily. It depends on Ca(2+) as a cofactor. The cofactor is Zn(2+). Upon purification gives 67 kDa, 78 kDa, 82 kDa and 116 kDa (full-length) proteins all of which have the same N-terminus; only the longest form digests insoluble collagen. At least 2 in vivo isolated forms (C1b and C1c) are missing the second collagen-binding domain, ending on Lys-1006 and Lys-1018 respectively.

It localises to the secreted. It catalyses the reaction Digestion of native collagen in the triple helical region at Xaa-|-Gly bonds. With synthetic peptides, a preference is shown for Gly at P3 and P1', Pro and Ala at P2 and P2', and hydroxyproline, Ala or Arg at P3'.. Inhibited by 1-10-phenanthroline. Inhibited by peptidomimetic isoamyl-phosphonyl-Gly-Pro-Ala, which binds to Zn(2+). Inhibited by broad-spectrum zinc metalloprotease inhibitor batimastat. N-aryl mercaptoacetamide-based inhibitors have been isolated that act on clostridial collagenases with submicromolar affinity while having negligibile activity on human collagenases. Clostridial collagenases are among the most efficient degraders of eukaryotic collagen known; saprophytes use collagen as a carbon source while pathogens additionally digest collagen to aid in host colonization. Has both tripeptidylcarboxypeptidase on Gly-X-Y and endopeptidase activities; the endopeptidase cuts within the triple helix region of collagen while tripeptidylcarboxypeptidase successively digests the exposed ends, thus clostridial collagenases can digest large sections of collagen. Active on soluble type I collagen, insoluble collagen, azocoll, soluble PZ-peptide (all collagenase substrates) and gelatin. The full-length protein has collagenase activity, while the in vivo derived C-terminally truncated shorter versions only act on gelatin. In vitro digestion of soluble calf skin collagen fibrils requires both ColG and ColH; ColG forms missing the second collagen-binding domain are also synergistic with ColH, although their overall efficiency is decreased. The activator domain (residues 119-388) and catalytic subdomain (389-670) open and close around substrate using a Gly-rich hinge (387-397), allowing digestion when the protein is closed. Binding of collagen requires Ca(2+) and is inhibited by EGTA; the collagen-binding domain (CBD, S3a plus S3b) specifically recognizes the triple-helical conformation made by 3 collagen protein chains in the triple-helical region. Isolated CBD (S3a plus S3b) binds collagen fibrils and sheets of many tissues. The sequence is that of Collagenase ColG from Hathewaya histolytica (Clostridium histolyticum).